An 85-amino-acid chain; its full sequence is NAD(P)H-quinone oxidoreductase subunit L (85 aa).

A run of 2 helical transmembrane segments spans residues I17–V37 and A54–L74.

It belongs to the complex I NdhL subunit family. As to quaternary structure, NDH-1 can be composed of about 15 different subunits; different subcomplexes with different compositions have been identified which probably have different functions.

Its subcellular location is the cellular thylakoid membrane. It catalyses the reaction a plastoquinone + NADH + (n+1) H(+)(in) = a plastoquinol + NAD(+) + n H(+)(out). The enzyme catalyses a plastoquinone + NADPH + (n+1) H(+)(in) = a plastoquinol + NADP(+) + n H(+)(out). In terms of biological role, NDH-1 shuttles electrons from an unknown electron donor, via FMN and iron-sulfur (Fe-S) centers, to quinones in the respiratory and/or the photosynthetic chain. The immediate electron acceptor for the enzyme in this species is believed to be plastoquinone. Couples the redox reaction to proton translocation, and thus conserves the redox energy in a proton gradient. Cyanobacterial NDH-1 also plays a role in inorganic carbon-concentration. The sequence is that of NAD(P)H-quinone oxidoreductase subunit L from Crocosphaera subtropica (strain ATCC 51142 / BH68) (Cyanothece sp. (strain ATCC 51142)).